The primary structure comprises 566 residues: Urease subunit alpha 2 (566 aa).

Positions 128 to 566 (GGVDTHIHFI…LPMAQRYFLF (439 aa)) constitute a Urease domain. 3 residues coordinate Ni(2+): His-133, His-135, and Lys-216. Lys-216 carries the post-translational modification N6-carboxylysine. Substrate is bound at residue His-218. Ni(2+) is bound by residues His-245 and His-271. Catalysis depends on His-319, which acts as the Proton donor. Asp-359 lines the Ni(2+) pocket.

Belongs to the metallo-dependent hydrolases superfamily. Urease alpha subunit family. As to quaternary structure, may form a heterohexamer of 3 UreC (alpha) and 3 UreAB (gamma/beta) subunits. May also form a heterotrimer of UreA (gamma), UreB (beta) and UreC (alpha) subunits. Three heterotrimers associate to form the active enzyme. Ni cation serves as cofactor. Carboxylation allows a single lysine to coordinate two nickel ions.

It is found in the cytoplasm. The enzyme catalyses urea + 2 H2O + H(+) = hydrogencarbonate + 2 NH4(+). It participates in nitrogen metabolism; urea degradation; CO(2) and NH(3) from urea (urease route): step 1/1. In Pseudomonas syringae pv. syringae (strain B728a), this protein is Urease subunit alpha 2.